Here is an 84-residue protein sequence, read N- to C-terminus: Delta-stichotoxin-Shd3a (84 aa).

An N-terminal signal peptide occupies residues Met1–Ala19. Positions Met20–Val33 are excised as a propeptide. Intrachain disulfides connect Cys38–Cys78, Cys40–Cys68, and Cys61–Cys79. A Lysine amide modification is found at Lys83.

It belongs to the sea anemone sodium channel inhibitory toxin family. Type II subfamily.

It localises to the secreted. It is found in the nematocyst. In terms of biological role, binds specifically to voltage-gated sodium channels (Nav), thereby delaying their inactivation during signal transduction. The sequence is that of Delta-stichotoxin-Shd3a from Stichodactyla haddoni (Saddle carpet anemone).